Here is a 314-residue protein sequence, read N- to C-terminus: Protein ATP1B4 (314 aa).

The span at 1 to 17 (MATTAGEQANYLQSADS) shows a compositional bias: polar residues. A disordered region spans residues 1–37 (MATTAGEQANYLQSADSMSDGRQHHPEEAGEKKQEEQ). Topologically, residues 1-69 (MATTAGEQAN…VLGRDKKSWA (69 aa)) are cytoplasmic. Positions 19 to 37 (SDGRQHHPEEAGEKKQEEQ) are enriched in basic and acidic residues. The helical transmembrane segment at 70–90 (LILLFYFILYCFLAGLFALCI) threads the bilayer. Residues 91–314 (YGLLATISPY…GRVAFTLHIG (224 aa)) are Extracellular-facing. A disulfide bond links C160 and C179. Residue N188 is glycosylated (N-linked (GlcNAc...) asparagine). 2 cysteine pairs are disulfide-bonded: C189-C205 and C228-C287. N-linked (GlcNAc...) asparagine glycosylation occurs at N264.

Belongs to the X(+)/potassium ATPases subunit beta family. In terms of assembly, composed of two subunits: alpha (catalytic) and beta (accessory). Glycosylated. In terms of tissue distribution, expressed in skeletal muscle, liver, lung, kidney, heart, brain and skin.

It localises to the membrane. In terms of biological role, this is the non-catalytic component of the active enzyme, which catalyzes the hydrolysis of ATP coupled with the exchange of Na(+) and K(+) ions across the plasma membrane. This Xenopus laevis (African clawed frog) protein is Protein ATP1B4 (atp1b4).